The sequence spans 611 residues: Muscarinic acetylcholine receptor gar-3 (611 aa).

The Extracellular portion of the chain corresponds to Met1–Met67. 2 N-linked (GlcNAc...) asparagine glycosylation sites follow: Asn28 and Asn33. Residues Ile68–Val88 traverse the membrane as a helical segment. Residues Ser89–Asn101 lie on the Cytoplasmic side of the membrane. Residues Tyr102–Phe122 traverse the membrane as a helical segment. The Extracellular portion of the chain corresponds to Thr123–Phe140. The cysteines at positions 138 and 218 are disulfide-linked. A helical membrane pass occupies residues Trp141–Phe161. At Asp162–Lys181 the chain is on the cytoplasmic side. The helical transmembrane segment at Ala182 to Ile202 threads the bilayer. Over Ser203 to Pro227 the chain is Extracellular. The helical transmembrane segment at Tyr228–Leu248 threads the bilayer. The Cytoplasmic portion of the chain corresponds to Tyr249 to Thr525. 4 disordered regions span residues Arg299 to Ala364, Ser377 to Ser432, Ser446 to Ile477, and Phe500 to Glu519. Low complexity predominate over residues Ser307–Ser317. The span at Gln503–Glu519 shows a compositional bias: basic and acidic residues. A helical membrane pass occupies residues Leu526–Trp546. Residues Glu547–Val557 lie on the Extracellular side of the membrane. A helical transmembrane segment spans residues Leu558–Ala578. Over Leu579–Asn611 the chain is Cytoplasmic.

The protein belongs to the G-protein coupled receptor 1 family. Muscarinic acetylcholine receptor subfamily.

It is found in the cell membrane. The muscarinic acetylcholine receptor mediates various cellular responses, including inhibition of adenylate cyclase, breakdown of phosphoinositides and modulation of potassium channels through the action of G proteins. Primary transducing effect is Pi turnover. Enhances the release of the neurotransmitter acetlycholine in cholinergic motor neurons, which in turn positively feeds back to depolarize body wall muscles and allows for the maintenance of normal body posture and locomotion. The sequence is that of Muscarinic acetylcholine receptor gar-3 (gar-3) from Caenorhabditis elegans.